Reading from the N-terminus, the 364-residue chain is Trans-enoyl reductase traG (364 aa).

51 to 54 is a binding site for NADP(+); the sequence is VDAK. A substrate-binding site is contributed by 136 to 143; that stretch reads LGLFTAGL. NADP(+)-binding positions include 176 to 179, 199 to 202, Tyr-217, and 264 to 265; these read STAT, SKAN, and LE. 286 to 290 is a substrate binding site; the sequence is ALTVF. 355-356 serves as a coordination point for NADP(+); it reads MS.

It belongs to the zinc-containing alcohol dehydrogenase family. In terms of assembly, monomer.

Its pathway is secondary metabolite biosynthesis. Trans-enoyl reductase; part of the tra gene cluster that produces terrestric acid. The clavatol biosynthesis cluster cla and the terrestric acid cluster tra are both involved in the production of peniphenones and penilactones. The non-reducing PKS claF is responsible for the formation of clavatol from successive condensations of 3 malonyl-CoA units, presumably with a simple acetyl-CoA starter unit, and 2 methylation steps. The esterase claE probably collaborates with claF by catalyzing the hydrolysis of ACP-bound acyl intermediates to free the ACP from stalled intermediates. The clavatol oxidase claD then converts clavatol to hydroxyclavatol. Spontaneous dehydration of hydroxyclavatol leads to the accumulation of the highly active ortho-quinone methide. On the other hand, the PKS-NRPS hybrid traA is involved in the formation of crustosic acid, with the help of traB and traD. The polyketide synthase module (PKS) of traA is responsible for the synthesis of the polyketide backbone via the condensation of an acetyl-CoA starter unit with 3 malonyl-CoA units. The downstream nonribosomal peptide synthetase (NRPS) module then amidates the carboxyl end of the polyketide with L-malic acid. Because traA lacks a designated enoylreductase (ER) domain, the required activity is provided the enoyl reductase traG. Crustosic acid undergoes decarboxylation and isomerization to the terrestric acid, catalyzed by the 2-oxoglutarate-dependent dioxygenase traH. Both acids are further converted to the 2 gamma-butyrolactones (R)-5-methyltetronic acid and (S)-5-carboxylmethyltetronic acid, with involvement of the cytochrome P450 monooxygenase claJ. Spontaneous addition of the methide to these gamma-butyrolactones leads to peniphenone D and penilactone D, which undergo again stereospecific attacking by methide to give penilactones A and B. This chain is Trans-enoyl reductase traG, found in Penicillium crustosum (Blue mold fungus).